A 149-amino-acid chain; its full sequence is Large ribosomal subunit protein bL9 (149 aa).

The protein belongs to the bacterial ribosomal protein bL9 family.

Functionally, binds to the 23S rRNA. The chain is Large ribosomal subunit protein bL9 from Aliivibrio salmonicida (strain LFI1238) (Vibrio salmonicida (strain LFI1238)).